A 306-amino-acid polypeptide reads, in one-letter code: UDP-N-acetylenolpyruvoylglucosamine reductase (306 aa).

The region spanning 34–198 is the FAD-binding PCMH-type domain; it reads VGGPADLLIT…LEVTFKLHNS (165 aa). Arg-177 is a catalytic residue. The active-site Proton donor is Ser-227. Residue Glu-297 is part of the active site.

Belongs to the MurB family. FAD is required as a cofactor.

Its subcellular location is the cytoplasm. The enzyme catalyses UDP-N-acetyl-alpha-D-muramate + NADP(+) = UDP-N-acetyl-3-O-(1-carboxyvinyl)-alpha-D-glucosamine + NADPH + H(+). The protein operates within cell wall biogenesis; peptidoglycan biosynthesis. Its function is as follows. Cell wall formation. The polypeptide is UDP-N-acetylenolpyruvoylglucosamine reductase (Clostridium botulinum (strain Langeland / NCTC 10281 / Type F)).